Reading from the N-terminus, the 50-residue chain is uncharacterized protein (50 aa).

The segment at 1-50 (MKTGFWQQVLPKRAGRRKEHPVQYMPHKKEENATGLMNPSLHTSHSAILK) is disordered. Polar residues predominate over residues 35 to 50 (GLMNPSLHTSHSAILK).

This is an uncharacterized protein from Treponema pallidum (strain Nichols).